We begin with the raw amino-acid sequence, 354 residues long: Ferredoxin--NADP reductase (354 aa).

FAD-binding residues include Asp42, Gln50, Tyr55, Ile95, Phe130, Asp299, and Thr339.

Belongs to the ferredoxin--NADP reductase type 2 family. In terms of assembly, homodimer. FAD serves as cofactor.

It catalyses the reaction 2 reduced [2Fe-2S]-[ferredoxin] + NADP(+) + H(+) = 2 oxidized [2Fe-2S]-[ferredoxin] + NADPH. The polypeptide is Ferredoxin--NADP reductase (Acidovorax sp. (strain JS42)).